A 538-amino-acid polypeptide reads, in one-letter code: Putative outer membrane porin BglH (538 aa).

Positions 1 to 25 are cleaved as a signal peptide; that stretch reads MFRRNIITSAILLMAPLAFSAQSLA.

Belongs to the porin LamB (TC 1.B.3) family.

The protein resides in the cell outer membrane. In terms of biological role, may be a sugar porin with a broad carbohydrate specificity. This Escherichia coli (strain UTI89 / UPEC) protein is Putative outer membrane porin BglH (bglH).